A 370-amino-acid chain; its full sequence is G-protein coupled receptor homolog K2 (370 aa).

Over 1–61 (MTSPTNSTML…CTFLEDTKYH (61 aa)) the chain is Extracellular. N-linked (GlcNAc...) asparagine; by host glycosylation is found at N6 and N51. Residues 62 to 82 (IIVIHIILFLLGSIGNIFVVS) form a helical membrane-spanning segment. Topologically, residues 83-94 (LIAFKRNKSITD) are cytoplasmic. The chain crosses the membrane as a helical span at residues 95–115 (IYILNLSMSDCIFVFQIPFIV). At 116-131 (YSKLDQWIFGNILCKI) the chain is on the extracellular side. A helical membrane pass occupies residues 132–152 (MSVLYYVGFFSNMFIITLMSI). Residues 153–171 (DRYFAIVHPIKRQPYRTKR) lie on the Cytoplasmic side of the membrane. A helical membrane pass occupies residues 172-192 (IGILMCCSAWLLSLILSSPVS). At 193–223 (KLYENIPHMSKDIYQCTLTNENDSIIAFIKR) the chain is on the extracellular side. A helical membrane pass occupies residues 224-244 (LMQIEITILGFLIPIIIFVYC). The Cytoplasmic portion of the chain corresponds to 245–265 (YYRIFTTVVRLRNRRKYKSIK). The helical transmembrane segment at 266–286 (IVLMIVVCSLICWIPLYIVLM) threads the bilayer. At 287–300 (IATIVSLYTSNIFR) the chain is on the extracellular side. A helical transmembrane segment spans residues 301–321 (HLCLYLNLAYAITFSETISLA). The Cytoplasmic portion of the chain corresponds to 322–370 (RCCINPIIYTLIGEHVRSRISSICSCIYRDNRIRKKLFSRKSSSSSNII).

The protein belongs to the G-protein coupled receptor 1 family.

It localises to the host cell membrane. Putative chemokine receptor. This chain is G-protein coupled receptor homolog K2, found in Sus scrofa (Pig).